The primary structure comprises 482 residues: Membrane-bound lytic murein transglycosylase F (482 aa).

An N-terminal signal peptide occupies residues 1–18; it reads MKGLFLRIITALALLFWA. The non-LT domain stretch occupies residues 19-267; the sequence is IDMVFPWQFL…NLKEKYLGHI (249 aa). Residues 268–482 are LT domain; sequence SQFDYVDTRS…NLEEIKENKD (215 aa). E312 is an active-site residue. A compositionally biased stretch (polar residues) spans 457-470; it reads ENQTTNDNANNESA. The segment at 457-482 is disordered; that stretch reads ENQTTNDNANNESAVKNLEEIKENKD. A compositionally biased stretch (basic and acidic residues) spans 473–482; the sequence is NLEEIKENKD.

This sequence in the N-terminal section; belongs to the bacterial solute-binding protein 3 family. The protein in the C-terminal section; belongs to the transglycosylase Slt family.

The protein resides in the cell outer membrane. The catalysed reaction is Exolytic cleavage of the (1-&gt;4)-beta-glycosidic linkage between N-acetylmuramic acid (MurNAc) and N-acetylglucosamine (GlcNAc) residues in peptidoglycan, from either the reducing or the non-reducing ends of the peptidoglycan chains, with concomitant formation of a 1,6-anhydrobond in the MurNAc residue.. Its function is as follows. Murein-degrading enzyme that degrades murein glycan strands and insoluble, high-molecular weight murein sacculi, with the concomitant formation of a 1,6-anhydromuramoyl product. Lytic transglycosylases (LTs) play an integral role in the metabolism of the peptidoglycan (PG) sacculus. Their lytic action creates space within the PG sacculus to allow for its expansion as well as for the insertion of various structures such as secretion systems and flagella. This chain is Membrane-bound lytic murein transglycosylase F, found in Haemophilus influenzae (strain 86-028NP).